Here is a 308-residue protein sequence, read N- to C-terminus: Leucine-rich repeat-containing protein 59 (308 aa).

Topologically, residues 1-248 are cytoplasmic; that stretch reads MARANGRSQN…LARRQSRLRK (248 aa). LRR repeat units lie at residues 10–31, 40–61, 63–84, 86–107, and 109–128; these read NLRDKLDGNELDLSLSDLSEVP, KATALDLSCNKLTSLPDDFCNL, YIVRLDLSKNQIAQLPSEFGRL, NLQHLDLLQNRIVALPVSFAQL, and SLKWLDLKDNPLKPALAKVA. Positions 154–223 form a coiled coil; sequence DHERELQRKL…NNNKKKAEEE (70 aa). Basic and acidic residues-rich tracts occupy residues 170–187, 194–203, and 218–237; these read KQRLEAQQRVKEEQDREL, QQKERKRRDY, and KKAEEEPSENHKPVPTPKEK. Residues 170-240 form a disordered region; the sequence is KQRLEAQQRV…VPTPKEKKLA (71 aa). A helical transmembrane segment spans residues 249–269; it reads IACILLFGLMVALLGVVACRF. At 270–308 the chain is on the lumenal side; the sequence is TDLKTFEVCRSVNAVYKETLSALHSNPVLERFLQDPSSQ.

As to quaternary structure, interacts with SGO1.

Its subcellular location is the microsome membrane. It localises to the endoplasmic reticulum membrane. The protein localises to the nucleus envelope. In terms of biological role, required for nuclear import of FGF1. The sequence is that of Leucine-rich repeat-containing protein 59 (lrrc59) from Xenopus tropicalis (Western clawed frog).